Consider the following 211-residue polypeptide: Recombination protein RecR (211 aa).

The C4-type zinc finger occupies 70-85; the sequence is CRECFLITDREVCPIC. The 98-residue stretch at 93–190 folds into the Toprim domain; that stretch reads KFICVVEESQ…KITRTAYGFQ (98 aa).

This sequence belongs to the RecR family.

Its function is as follows. May play a role in DNA repair. It seems to be involved in an RecBC-independent recombinational process of DNA repair. It may act with RecF and RecO. The chain is Recombination protein RecR from Aquifex aeolicus (strain VF5).